We begin with the raw amino-acid sequence, 201 residues long: Small ribosomal subunit protein uS4 (201 aa).

The tract at residues 26–46 (LARRAYAPGDHGRDRRGKLSE) is disordered. Over residues 35 to 44 (DHGRDRRGKL) the composition is skewed to basic and acidic residues. An S4 RNA-binding domain is found at 93 to 156 (RRLDNMVYRL…KNLDIIKNAV (64 aa)).

The protein belongs to the universal ribosomal protein uS4 family. As to quaternary structure, part of the 30S ribosomal subunit. Contacts protein S5. The interaction surface between S4 and S5 is involved in control of translational fidelity.

One of the primary rRNA binding proteins, it binds directly to 16S rRNA where it nucleates assembly of the body of the 30S subunit. In terms of biological role, with S5 and S12 plays an important role in translational accuracy. This Limosilactobacillus reuteri (strain DSM 20016) (Lactobacillus reuteri) protein is Small ribosomal subunit protein uS4.